The chain runs to 170 residues: Cyclic dof factor 4 (170 aa).

Residues 25–51 form a disordered region; the sequence is NEEETHPPEQEATIAVRSSSSSDLTAE. Residues 58–112 form a Dof-type zinc finger; sequence IACPRCKSMETKFCYFNNYNVNQPRHFCKGCHRYWTAGGALRNVPVGAGRRKSKP. Zn(2+) contacts are provided by cysteine 60, cysteine 63, cysteine 85, and cysteine 88.

As to expression, expressed in the vasculature of cotyledons and hypocotyls, leaves and roots.

Its subcellular location is the nucleus. Functionally, transcription factor that binds specifically to a 5'-AA[AG]G-3' consensus core sequence. Transcriptional repressor of 'CONSTANS' expression. Regulates a photoperiodic flowering response. The chain is Cyclic dof factor 4 (CDF4) from Arabidopsis thaliana (Mouse-ear cress).